Here is a 522-residue protein sequence, read N- to C-terminus: UPF0288 protein MTH_1865 (522 aa).

It belongs to the UPF0288 family.

The sequence is that of UPF0288 protein MTH_1865 from Methanothermobacter thermautotrophicus (strain ATCC 29096 / DSM 1053 / JCM 10044 / NBRC 100330 / Delta H) (Methanobacterium thermoautotrophicum).